A 368-amino-acid chain; its full sequence is Chaperone protein DnaJ (368 aa).

One can recognise a J domain in the interval 5–70 (DYYEVLGVSK…EKRSMYDRMG (66 aa)). The CR-type zinc-finger motif lies at 132–210 (GVKKTITFTA…CHGSGVADRQ (79 aa)). Residues cysteine 145, cysteine 148, cysteine 162, cysteine 165, cysteine 184, cysteine 187, cysteine 198, and cysteine 201 each contribute to the Zn(2+) site. 4 CXXCXGXG motif repeats span residues 145 to 152 (CEVCDGKG), 162 to 169 (CRTCHGTG), 184 to 191 (CGTCRGQG), and 198 to 205 (CQSCHGSG). A disordered region spans residues 349-368 (DGDEHSSSPKKKSFFDRLFD). The span at 350 to 368 (GDEHSSSPKKKSFFDRLFD) shows a compositional bias: basic and acidic residues.

The protein belongs to the DnaJ family. Homodimer. It depends on Zn(2+) as a cofactor.

It localises to the cytoplasm. Participates actively in the response to hyperosmotic and heat shock by preventing the aggregation of stress-denatured proteins and by disaggregating proteins, also in an autonomous, DnaK-independent fashion. Unfolded proteins bind initially to DnaJ; upon interaction with the DnaJ-bound protein, DnaK hydrolyzes its bound ATP, resulting in the formation of a stable complex. GrpE releases ADP from DnaK; ATP binding to DnaK triggers the release of the substrate protein, thus completing the reaction cycle. Several rounds of ATP-dependent interactions between DnaJ, DnaK and GrpE are required for fully efficient folding. Also involved, together with DnaK and GrpE, in the DNA replication of plasmids through activation of initiation proteins. In Acinetobacter baylyi (strain ATCC 33305 / BD413 / ADP1), this protein is Chaperone protein DnaJ.